A 313-amino-acid chain; its full sequence is Desiccation-related protein PCC13-62 (313 aa).

The first 26 residues, 1–26 (MAQQPTFASAALVSFFLALICSCSYA), serve as a signal peptide directing secretion.

This is Desiccation-related protein PCC13-62 from Craterostigma plantagineum (Blue gem).